A 502-amino-acid polypeptide reads, in one-letter code: Glycogen synthase (502 aa).

Position 24 (Lys24) interacts with ADP-alpha-D-glucose.

This sequence belongs to the glycosyltransferase 1 family. Bacterial/plant glycogen synthase subfamily.

It catalyses the reaction [(1-&gt;4)-alpha-D-glucosyl](n) + ADP-alpha-D-glucose = [(1-&gt;4)-alpha-D-glucosyl](n+1) + ADP + H(+). The protein operates within glycan biosynthesis; glycogen biosynthesis. Its function is as follows. Synthesizes alpha-1,4-glucan chains using ADP-glucose. In Nitrosomonas eutropha (strain DSM 101675 / C91 / Nm57), this protein is Glycogen synthase.